The following is a 297-amino-acid chain: Probable porphobilinogen deaminase (297 aa).

Cys233 carries the S-(dipyrrolylmethanemethyl)cysteine modification.

It belongs to the HMBS family. Dipyrromethane is required as a cofactor.

It carries out the reaction 4 porphobilinogen + H2O = hydroxymethylbilane + 4 NH4(+). The protein operates within porphyrin-containing compound metabolism; protoporphyrin-IX biosynthesis; coproporphyrinogen-III from 5-aminolevulinate: step 2/4. Its function is as follows. Tetrapolymerization of the monopyrrole PBG into the hydroxymethylbilane pre-uroporphyrinogen in several discrete steps. The polypeptide is Probable porphobilinogen deaminase (Thermoplasma volcanium (strain ATCC 51530 / DSM 4299 / JCM 9571 / NBRC 15438 / GSS1)).